Here is a 155-residue protein sequence, read N- to C-terminus: Small ribosomal subunit protein uS9 (155 aa).

This sequence belongs to the universal ribosomal protein uS9 family.

In Sinorhizobium fredii (strain NBRC 101917 / NGR234), this protein is Small ribosomal subunit protein uS9.